The primary structure comprises 258 residues: Small ribosomal subunit protein uS2 (258 aa).

It belongs to the universal ribosomal protein uS2 family.

The chain is Small ribosomal subunit protein uS2 from Granulibacter bethesdensis (strain ATCC BAA-1260 / CGDNIH1).